A 123-amino-acid polypeptide reads, in one-letter code: Ig heavy chain V region HPCG14 (123 aa).

Positions 1 to 114 (EVKLVESGGG…GYDYWFDVWG (114 aa)) constitute an Ig-like domain.

This is Ig heavy chain V region HPCG14 from Mus musculus (Mouse).